A 525-amino-acid polypeptide reads, in one-letter code: Probable malate:quinone oxidoreductase (525 aa).

The protein belongs to the MQO family. It depends on FAD as a cofactor.

It carries out the reaction (S)-malate + a quinone = a quinol + oxaloacetate. It participates in carbohydrate metabolism; tricarboxylic acid cycle; oxaloacetate from (S)-malate (quinone route): step 1/1. This chain is Probable malate:quinone oxidoreductase, found in Serratia proteamaculans (strain 568).